The sequence spans 329 residues: Glycerol-3-phosphate dehydrogenase [NAD(P)+] (329 aa).

NADPH is bound by residues serine 10, tryptophan 11, arginine 31, and lysine 105. Residues lysine 105, glycine 134, and serine 136 each coordinate sn-glycerol 3-phosphate. Alanine 138 provides a ligand contact to NADPH. Lysine 189, aspartate 242, serine 252, arginine 253, and asparagine 254 together coordinate sn-glycerol 3-phosphate. The active-site Proton acceptor is lysine 189. Arginine 253 contacts NADPH. 2 residues coordinate NADPH: valine 277 and glutamate 279.

The protein belongs to the NAD-dependent glycerol-3-phosphate dehydrogenase family.

It is found in the cytoplasm. It catalyses the reaction sn-glycerol 3-phosphate + NAD(+) = dihydroxyacetone phosphate + NADH + H(+). It carries out the reaction sn-glycerol 3-phosphate + NADP(+) = dihydroxyacetone phosphate + NADPH + H(+). It functions in the pathway membrane lipid metabolism; glycerophospholipid metabolism. In terms of biological role, catalyzes the reduction of the glycolytic intermediate dihydroxyacetone phosphate (DHAP) to sn-glycerol 3-phosphate (G3P), the key precursor for phospholipid synthesis. This chain is Glycerol-3-phosphate dehydrogenase [NAD(P)+], found in Neisseria meningitidis serogroup C (strain 053442).